We begin with the raw amino-acid sequence, 317 residues long: 4-hydroxy-3-methylbut-2-enyl diphosphate reductase (317 aa).

[4Fe-4S] cluster is bound at residue cysteine 12. The (2E)-4-hydroxy-3-methylbut-2-enyl diphosphate site is built by histidine 41 and histidine 74. Dimethylallyl diphosphate is bound by residues histidine 41 and histidine 74. The isopentenyl diphosphate site is built by histidine 41 and histidine 74. Residue cysteine 97 participates in [4Fe-4S] cluster binding. A (2E)-4-hydroxy-3-methylbut-2-enyl diphosphate-binding site is contributed by histidine 125. Histidine 125 serves as a coordination point for dimethylallyl diphosphate. Histidine 125 contacts isopentenyl diphosphate. The Proton donor role is filled by glutamate 127. Threonine 168 provides a ligand contact to (2E)-4-hydroxy-3-methylbut-2-enyl diphosphate. Cysteine 198 is a [4Fe-4S] cluster binding site. (2E)-4-hydroxy-3-methylbut-2-enyl diphosphate contacts are provided by serine 226, serine 227, asparagine 228, and serine 270. Residues serine 226, serine 227, asparagine 228, and serine 270 each contribute to the dimethylallyl diphosphate site. Residues serine 226, serine 227, asparagine 228, and serine 270 each contribute to the isopentenyl diphosphate site.

Belongs to the IspH family. In terms of assembly, homodimer. [4Fe-4S] cluster is required as a cofactor.

The catalysed reaction is isopentenyl diphosphate + 2 oxidized [2Fe-2S]-[ferredoxin] + H2O = (2E)-4-hydroxy-3-methylbut-2-enyl diphosphate + 2 reduced [2Fe-2S]-[ferredoxin] + 2 H(+). It carries out the reaction dimethylallyl diphosphate + 2 oxidized [2Fe-2S]-[ferredoxin] + H2O = (2E)-4-hydroxy-3-methylbut-2-enyl diphosphate + 2 reduced [2Fe-2S]-[ferredoxin] + 2 H(+). It functions in the pathway isoprenoid biosynthesis; dimethylallyl diphosphate biosynthesis; dimethylallyl diphosphate from (2E)-4-hydroxy-3-methylbutenyl diphosphate: step 1/1. Its pathway is isoprenoid biosynthesis; isopentenyl diphosphate biosynthesis via DXP pathway; isopentenyl diphosphate from 1-deoxy-D-xylulose 5-phosphate: step 6/6. Its function is as follows. Catalyzes the conversion of 1-hydroxy-2-methyl-2-(E)-butenyl 4-diphosphate (HMBPP) into a mixture of isopentenyl diphosphate (IPP) and dimethylallyl diphosphate (DMAPP). Acts in the terminal step of the DOXP/MEP pathway for isoprenoid precursor biosynthesis. This Serratia proteamaculans (strain 568) protein is 4-hydroxy-3-methylbut-2-enyl diphosphate reductase.